Consider the following 55-residue polypeptide: ATP synthase small subunit 6-A, mitochondrial (55 aa).

A mitochondrion-targeting transit peptide spans 1-11; sequence MRLFDPWPVFF. Residues 21-39 form a helical membrane-spanning segment; the sequence is FLTGFAVTGVLITKLTAGL.

Belongs to the ATPase 6 subunit family.

It is found in the mitochondrion inner membrane. Mitochondrial membrane ATP synthase (F(1)F(0) ATP synthase or Complex V) produces ATP from ADP in the presence of a proton gradient across the membrane which is generated by electron transport complexes of the respiratory chain. F-type ATPases consist of two structural domains, F(1) - containing the extramembraneous catalytic core and F(0) - containing the membrane proton channel, linked together by a central stalk and a peripheral stalk. During catalysis, ATP synthesis in the catalytic domain of F(1) is coupled via a rotary mechanism of the central stalk subunits to proton translocation. Part of the complex F(0) domain. Confers tolerance to several abiotic stresses (e.g. salt, mannitol, drought, oxidative and cold stresses), probably by providing additional energy needed for cell homeostasis. In Arabidopsis thaliana (Mouse-ear cress), this protein is ATP synthase small subunit 6-A, mitochondrial.